The following is a 329-amino-acid chain: Serine dehydratase-like (329 aa).

Residue Met1 is modified to N-acetylmethionine. Lys48 bears the N6-(pyridoxal phosphate)lysine mark.

Belongs to the serine/threonine dehydratase family. In terms of assembly, monomer. Homodimer. Requires pyridoxal 5'-phosphate as cofactor.

The enzyme catalyses L-serine = pyruvate + NH4(+). It catalyses the reaction L-threonine = 2-oxobutanoate + NH4(+). The catalysed reaction is L-glutamate = D-glutamate. With respect to regulation, serine dehydratase activity is inhibited by manganese chloride, ferrous chloride, cobalt chloride, cupric chloride, nickel chloride and zinc chloride. Glutamate racemase activity is inhibited by manganese chloride, ferrous chloride, cupric chloride and zinc chloride. Its function is as follows. Catalyzes the pyridoxal-phosphate-dependent dehydrative deamination of L-threonine and L-serine to ammonia and alpha-ketobutyrate and pyruvate, respectively. Also exhibits racemase activity towards L-glutamate and D-glutamate. This Rattus norvegicus (Rat) protein is Serine dehydratase-like (Sdsl).